A 214-amino-acid chain; its full sequence is Large ribosomal subunit protein bL25 (214 aa).

Belongs to the bacterial ribosomal protein bL25 family. CTC subfamily. Part of the 50S ribosomal subunit; part of the 5S rRNA/L5/L18/L25 subcomplex. Contacts the 5S rRNA. Binds to the 5S rRNA independently of L5 and L18.

In terms of biological role, this is one of the proteins that binds to the 5S RNA in the ribosome where it forms part of the central protuberance. The chain is Large ribosomal subunit protein bL25 from Polynucleobacter necessarius subsp. necessarius (strain STIR1).